Here is a 60-residue protein sequence, read N- to C-terminus: Potassium channel toxin ImKTx88 (60 aa).

An N-terminal signal peptide occupies residues 1–22 (MSNFSVFLIALLFCSVFILSEA). 3 disulfide bridges follow: Cys30–Cys51, Cys36–Cys56, and Cys40–Cys58.

Belongs to the short scorpion toxin superfamily. Potassium channel inhibitor family. Expressed by the venom gland.

The protein resides in the secreted. Its function is as follows. Recombinant toxin selectively inhibits Kv1.3/KCNA3 potassium channels with an IC(50) of 91 pM. The protein is Potassium channel toxin ImKTx88 of Isometrus maculatus (Lesser brown scorpion).